The primary structure comprises 220 residues: Iron-sulfur cluster repair protein YtfE (220 aa).

This sequence belongs to the RIC family. YtfE subfamily. As to quaternary structure, homodimer.

It is found in the cytoplasm. Its function is as follows. Di-iron-containing protein involved in the repair of iron-sulfur clusters damaged by oxidative and nitrosative stress conditions. In Salmonella choleraesuis (strain SC-B67), this protein is Iron-sulfur cluster repair protein YtfE.